Reading from the N-terminus, the 518-residue chain is AarF domain-containing kinase 1 (518 aa).

Positions 149–468 (SFEREPLGTA…SKCCVQSSYA (320 aa)) constitute a Protein kinase domain. ATP is bound by residues 155 to 163 (LGTASLAQV) and lysine 177. Residue aspartate 309 is the Proton acceptor of the active site.

The protein belongs to the protein kinase superfamily. ADCK protein kinase family.

It is found in the mitochondrion. Essential for maintaining mitochondrial cristae formation and mitochondrial function by acting via YME1L to regulate the mitochondrial structural proteins Opa1 and Mitofilin. This function is likely to be kinase-independent. Functions in tracheal development and larval molting probably by acting in sterol modification and/or intracellular lipid trafficking. The action of this enzyme is not yet clear. It is not known if it has protein kinase activity and what type of substrate it would phosphorylate (Ser, Thr or Tyr). The polypeptide is AarF domain-containing kinase 1 (Drosophila melanogaster (Fruit fly)).